The following is a 560-amino-acid chain: Ribonuclease J 1 (560 aa).

Residues His76, His78, Asp80, His81, His144, and Asp166 each coordinate Zn(2+). 366–370 (HTSGH) is a substrate binding site. A Zn(2+)-binding site is contributed by His392.

The protein belongs to the metallo-beta-lactamase superfamily. RNA-metabolizing metallo-beta-lactamase-like family. Bacterial RNase J subfamily. As to quaternary structure, homodimer, may be a subunit of the RNA degradosome. Zn(2+) is required as a cofactor.

The protein localises to the cytoplasm. An RNase that has 5'-3' exonuclease and possibly endonuclease activity. Involved in maturation of rRNA and in some organisms also mRNA maturation and/or decay. Has an overlapping but not completely redundant role with RNase J2 in the decay of mRNA. The polypeptide is Ribonuclease J 1 (Streptococcus pyogenes serotype M3 (strain ATCC BAA-595 / MGAS315)).